Reading from the N-terminus, the 198-residue chain is Pyridoxal 5'-phosphate synthase subunit PdxT (198 aa).

49–51 (GES) lines the L-glutamine pocket. The active-site Nucleophile is cysteine 81. L-glutamine-binding positions include arginine 113 and 141 to 142 (IR). Catalysis depends on charge relay system residues histidine 177 and glutamate 179.

The protein belongs to the glutaminase PdxT/SNO family. As to quaternary structure, in the presence of PdxS, forms a dodecamer of heterodimers. Only shows activity in the heterodimer.

It catalyses the reaction aldehydo-D-ribose 5-phosphate + D-glyceraldehyde 3-phosphate + L-glutamine = pyridoxal 5'-phosphate + L-glutamate + phosphate + 3 H2O + H(+). It carries out the reaction L-glutamine + H2O = L-glutamate + NH4(+). Its pathway is cofactor biosynthesis; pyridoxal 5'-phosphate biosynthesis. Its function is as follows. Catalyzes the hydrolysis of glutamine to glutamate and ammonia as part of the biosynthesis of pyridoxal 5'-phosphate. The resulting ammonia molecule is channeled to the active site of PdxS. This Mycobacterium tuberculosis (strain ATCC 25177 / H37Ra) protein is Pyridoxal 5'-phosphate synthase subunit PdxT.